Reading from the N-terminus, the 2225-residue chain is Genome polyprotein (2225 aa).

2 consecutive short sequence motifs ((L)YPX(n)L motif) follow at residues 167 to 171 (YPHGL) and 200 to 205 (YPVWEL). The interval 766–836 (MMSRIAAGDL…PRKMKGLFSQ (71 aa)) is involved in P1-2A pentamerization. Residues 1011-1031 (TVDIVNIVLCFVKSGILLYVI) traverse the membrane as a helical segment. Positions 1043–1070 (IGLLRVMNYADIGCSVISCGKVFSKMLE) are membrane-penetrating ability. Residues 1127-1152 (KKKDVLNVLKDNQQRIERAIEEADNF) adopt a coiled-coil conformation. The SF3 helicase domain occupies 1204-1366 (HQKLKNLGSI…SFFQNPHNDM (163 aa)). Residue 1230-1237 (GKRGGGKS) participates in ATP binding. Residues 1460 to 1480 (WVAVGAAVGILGVLVGGWFVY) traverse the membrane as a helical segment. Tyr1497 carries the post-translational modification O-(5'-phospho-RNA)-tyrosine. Residues 1512–1726 (DPVESQSTLE…VAKLVTQEMF (215 aa)) enclose the Peptidase C3 domain. Catalysis depends on for protease 3C activity residues His1561, Asp1601, and Cys1689. The RdRp catalytic domain maps to 1974-2095 (DVGLDLDFSA…VFSRDIQIDN (122 aa)).

Belongs to the picornaviridae polyprotein family. In terms of assembly, homodimer. Homomultimer; probably interacts with membranes in a multimeric form. Seems to assemble into amyloid-like fibers. As to quaternary structure, homodimer. Monomer. Interacts with protein 3CD. Interacts with host ACBD3. In terms of assembly, interacts with protein 3AB. As to quaternary structure, interacts with human MAVS. Homodimer; disulfide-linked. In terms of assembly, homopentamer. Homooligomer. As to quaternary structure, interacts with capsid protein VP2. Interacts with capsid protein VP3. Interacts with capsid protein VP1. Interacts with capsid protein VP3. In terms of assembly, interacts with capsid protein VP1. Interacts with capsid protein VP2. Specific enzymatic cleavages by viral protease in vivo yield a variety of precursors and mature proteins. Polyprotein processing intermediates are produced, such as P1-2A which is a functional precursor of the structural proteins, VP0 which is a VP4-VP2 precursor, VP1-2A precursor, 3ABC precursor which is a stable and catalytically active precursor of 3A, 3B and 3C proteins, 3AB and 3CD precursors. The assembly signal 2A is removed from VP1-2A by a host protease, possibly host Cathepsin L. This cleavage occurs over a region of 3 amino-acids probably generating VP1 proteins with heterogeneous C-termini. Post-translationally, during virion maturation, immature virions are rendered infectious following cleavage of VP0 into VP4 and VP2. This maturation seems to be an autocatalytic event triggered by the presence of RNA in the capsid and is followed by a conformational change of the particle. In terms of processing, the assembly signal 2A is removed from VP1-2A by a host protease, possibly host Cathepsin L in naked virions. This cleavage does not occur in enveloped virions. This cleavage occurs over a region of 3 amino-acids probably generating VP1 proteins with heterogeneous C-termini. VPg is uridylylated prior to priming replication into VPg-pUpU. Post-translationally, unlike other picornaviruses, does not seem to be myristoylated.

It is found in the virion. The protein resides in the host endosome. Its subcellular location is the host multivesicular body. The protein localises to the host membrane. It localises to the host mitochondrion outer membrane. It is found in the host cytoplasm. The protein resides in the host cytoplasmic vesicle membrane. The enzyme catalyses RNA(n) + a ribonucleoside 5'-triphosphate = RNA(n+1) + diphosphate. It catalyses the reaction a ribonucleoside 5'-triphosphate + H2O = a ribonucleoside 5'-diphosphate + phosphate + H(+). It carries out the reaction Selective cleavage of Gln-|-Gly bond in the poliovirus polyprotein. In other picornavirus reactions Glu may be substituted for Gln, and Ser or Thr for Gly.. Functionally, capsid proteins VP1, VP2, and VP3 form a closed capsid enclosing the viral positive strand RNA genome. All these proteins contain a beta-sheet structure called beta-barrel jelly roll. Together they form an icosahedral capsid (T=3) composed of 60 copies of each VP1, VP2, and VP3, with a diameter of approximately 300 Angstroms. VP1 is situated at the 12 fivefold axes, whereas VP2 and VP3 are located at the quasi-sixfold axes. The naked capsid interacts with the host receptor HAVCR1 to provide virion attachment to and probably entry into the target cell. In terms of biological role, VP0 precursor is a component of the immature procapsids. Plays a role in the assembly of the 12 pentamers into an icosahedral structure. Has not been detected in mature virions, supposedly owing to its small size. Its function is as follows. Precursor component of immature procapsids that corresponds to an extended form of the structural protein VP1. After maturation, possibly by the host Cathepsin L, the assembly signal 2A is cleaved to give rise to the mature VP1 protein. Functionally, functions as a viroporin. Affects membrane integrity and causes an increase in membrane permeability. Involved in host intracellular membrane rearrangements probably to give rise to the viral factories. Does not disrupt calcium homeostasis or glycoprotein trafficking. Antagonizes the innate immune response of the host by suppressing IFN-beta synthesis, which it achieves by interfering with the RIG-I/IFIH1 pathway. In terms of biological role, affects membrane integrity and causes an increase in membrane permeability. Associates with and induces structural rearrangements of intracellular membranes. Displays RNA-binding activity. Its function is as follows. The precursor 3ABC is targeted to the mitochondrial membrane where protease 3C activity cleaves and inhibits the host antiviral protein MAVS, thereby disrupting activation of IRF3 through the IFIH1/MDA5 pathway. In vivo, the protease activity of 3ABC precursor is more efficient in cleaving the 2BC precursor than that of protein 3C. The 3ABC precursor may therefore play a role in the proteolytic processing of the polyprotein. Possible viroporin. Functionally, interacts with the 3CD precursor and with RNA structures found at both the 5'- and 3'-termini of the viral genome. Since the 3AB precursor contains the hydrophobic domain 3A, it probably anchors the whole viral replicase complex to intracellular membranes on which viral RNA synthesis occurs. In terms of biological role, may serve as membrane anchor to the 3AB and 3ABC precursors via its hydrophobic domain. May interact with RNA. Acts as a primer for viral RNA replication and remains covalently bound to viral genomic RNA. VPg is uridylylated prior to priming replication into VPg-pUpU. The VPg-pUpU is then used as primer on the genomic RNA poly(A) by the RNA-dependent RNA polymerase to replicate the viral genome. Its function is as follows. Cysteine protease that generates mature viral proteins from the precursor polyprotein. In addition to its proteolytic activity, it binds to viral RNA, and thus influences viral genome replication. RNA and substrate bind cooperatively to the protease. Cleaves IKBKG/NEMO to impair innate immune signaling. Cleaves host PABPC1 which may participate in the switch of viral translation to RNA synthesis. Functionally, interacts with the 3AB precursor and with RNA structures found at both the 5'- and 3'-termini of the viral genome. Disrupts TLR3 signaling by degrading the host adapter protein TICAM1/TRIF. In terms of biological role, RNA-directed RNA polymerase 3D-POL replicates genomic and antigenomic RNA by recognizing replications specific signals. The sequence is that of Genome polyprotein from Homo sapiens (Human).